Here is a 396-residue protein sequence, read N- to C-terminus: Elongation factor Tu (396 aa).

Positions 10–206 (KPHCNIGTIG…QVDAYIPQPE (197 aa)) constitute a tr-type G domain. The interval 19 to 26 (GHVDHGKT) is G1. 19–26 (GHVDHGKT) provides a ligand contact to GTP. Threonine 26 is a Mg(2+) binding site. The interval 60-64 (GITIS) is G2. The segment at 81-84 (DCPG) is G3. Residues 81 to 85 (DCPGH) and 136 to 139 (NKVD) contribute to the GTP site. The interval 136 to 139 (NKVD) is G4. Positions 174–176 (SAL) are G5.

This sequence belongs to the TRAFAC class translation factor GTPase superfamily. Classic translation factor GTPase family. EF-Tu/EF-1A subfamily. In terms of assembly, monomer.

It is found in the cytoplasm. It carries out the reaction GTP + H2O = GDP + phosphate + H(+). Its function is as follows. GTP hydrolase that promotes the GTP-dependent binding of aminoacyl-tRNA to the A-site of ribosomes during protein biosynthesis. The sequence is that of Elongation factor Tu from Gluconobacter oxydans (strain 621H) (Gluconobacter suboxydans).